Consider the following 494-residue polypeptide: MKKQAFSSEQYLNLQRDHILERINQFDGKLYLEFGGKMLEDFHAARVLPGYEPDNKIKLLQELKEQVEVVIAINASNIEHSKARGDLGISYDQEVLRLIDKFNELGIFVGSVVITQYAGQPAADAFRNQLEKNGIDSYLHYPIKGYPTDMDHIISPEGMGKNDYIKTSRNLIVVTAPGPGSGKLATCMSNMYHDQINGIKSGYAKFETFPVWNLPLHHPVNLAYEAATADLDDVNMIDPFHLQTYGETTVNYNRDIEIFPVLKRMLERILGKSPYASPTDMGVNMVGFAITDDEAAVEASKQEIIRRYYQTVLDFKAEKVSEAAVKKIELLMNDLGITPADRKVAVVARQKAEETGGPALAFELPNGEIVTGKNSELFGPTAAALINAIKKSADIAKEVKLIEPEVVKPIQGLKIDHLGSRNPRLHSNEILIALAITATENPDAARAMEELGNLKGSEAHSTIILTDEDKNVLRKLGINVTFDPYYQYDRLYRK.

This sequence belongs to the UPF0371 family.

This is UPF0371 protein SPCG_0344 from Streptococcus pneumoniae (strain CGSP14).